The following is a 737-amino-acid chain: Catalase-peroxidase 2 (737 aa).

A disordered region spans residues 1–33 (MPEATEHPPIGEAQTEPAQSGCPMVIKPPVEGG). The segment at residues 107-235 (WHAAGTYRVQ…LGASHMGLIY (129 aa)) is a cross-link (tryptophyl-tyrosyl-methioninium (Trp-Tyr) (with M-261)). The active-site Proton acceptor is H108. The tryptophyl-tyrosyl-methioninium (Tyr-Met) (with W-107) cross-link spans 235–261 (YVNPEGPEGNPDPIAAAIDIRETFGRM). H276 is a heme binding site.

It belongs to the peroxidase family. Peroxidase/catalase subfamily. As to quaternary structure, homodimer or homotetramer. Requires heme b as cofactor. Formation of the three residue Trp-Tyr-Met cross-link is important for the catalase, but not the peroxidase activity of the enzyme.

It carries out the reaction H2O2 + AH2 = A + 2 H2O. The catalysed reaction is 2 H2O2 = O2 + 2 H2O. Functionally, bifunctional enzyme with both catalase and broad-spectrum peroxidase activity. The polypeptide is Catalase-peroxidase 2 (Mycolicibacterium vanbaalenii (strain DSM 7251 / JCM 13017 / BCRC 16820 / KCTC 9966 / NRRL B-24157 / PYR-1) (Mycobacterium vanbaalenii)).